Consider the following 346-residue polypeptide: Holliday junction branch migration complex subunit RuvB (346 aa).

Residues 1–183 (MTEQRIIASS…FGIVQRLEFY (183 aa)) are large ATPase domain (RuvB-L). ATP contacts are provided by residues I22, R23, G64, K67, T68, T69, 130-132 (EDF), R173, Y183, and R220. A Mg(2+)-binding site is contributed by T68. Residues 184–254 (SPQELTRIVI…VAQAAMQMLK (71 aa)) are small ATPAse domain (RuvB-S). Residues 257–346 (PEGFDELDRR…PGIGEPGDLF (90 aa)) are head domain (RuvB-H). The DNA site is built by R293, R312, and R317.

The protein belongs to the RuvB family. In terms of assembly, homohexamer. Forms an RuvA(8)-RuvB(12)-Holliday junction (HJ) complex. HJ DNA is sandwiched between 2 RuvA tetramers; dsDNA enters through RuvA and exits via RuvB. An RuvB hexamer assembles on each DNA strand where it exits the tetramer. Each RuvB hexamer is contacted by two RuvA subunits (via domain III) on 2 adjacent RuvB subunits; this complex drives branch migration. In the full resolvosome a probable DNA-RuvA(4)-RuvB(12)-RuvC(2) complex forms which resolves the HJ.

The protein resides in the cytoplasm. It carries out the reaction ATP + H2O = ADP + phosphate + H(+). The RuvA-RuvB-RuvC complex processes Holliday junction (HJ) DNA during genetic recombination and DNA repair, while the RuvA-RuvB complex plays an important role in the rescue of blocked DNA replication forks via replication fork reversal (RFR). RuvA specifically binds to HJ cruciform DNA, conferring on it an open structure. The RuvB hexamer acts as an ATP-dependent pump, pulling dsDNA into and through the RuvAB complex. RuvB forms 2 homohexamers on either side of HJ DNA bound by 1 or 2 RuvA tetramers; 4 subunits per hexamer contact DNA at a time. Coordinated motions by a converter formed by DNA-disengaged RuvB subunits stimulates ATP hydrolysis and nucleotide exchange. Immobilization of the converter enables RuvB to convert the ATP-contained energy into a lever motion, pulling 2 nucleotides of DNA out of the RuvA tetramer per ATP hydrolyzed, thus driving DNA branch migration. The RuvB motors rotate together with the DNA substrate, which together with the progressing nucleotide cycle form the mechanistic basis for DNA recombination by continuous HJ branch migration. Branch migration allows RuvC to scan DNA until it finds its consensus sequence, where it cleaves and resolves cruciform DNA. This Xanthomonas axonopodis pv. citri (strain 306) protein is Holliday junction branch migration complex subunit RuvB.